Here is a 176-residue protein sequence, read N- to C-terminus: ATP-dependent protease subunit HslV (176 aa).

Thr-5 is an active-site residue. Ser-161, Cys-164, and Thr-167 together coordinate Na(+).

This sequence belongs to the peptidase T1B family. HslV subfamily. As to quaternary structure, a double ring-shaped homohexamer of HslV is capped on each side by a ring-shaped HslU homohexamer. The assembly of the HslU/HslV complex is dependent on binding of ATP.

It is found in the cytoplasm. It catalyses the reaction ATP-dependent cleavage of peptide bonds with broad specificity.. Its activity is regulated as follows. Allosterically activated by HslU binding. Functionally, protease subunit of a proteasome-like degradation complex believed to be a general protein degrading machinery. The sequence is that of ATP-dependent protease subunit HslV from Desulfitobacterium hafniense (strain Y51).